A 135-amino-acid polypeptide reads, in one-letter code: uncharacterized protein (135 aa).

The segment at 56-135 (VQSHNRGINN…QKGQLKIEKV (80 aa)) is disordered. The span at 64–74 (NNRRRDQKRKQ) shows a compositional bias: basic residues. Polar residues predominate over residues 77–89 (SIKQDNDLNVSSE). Residues 108–135 (YKETPDLDEPGSREKRVSQKGQLKIEKV) are compositionally biased toward basic and acidic residues.

This is an uncharacterized protein from Schizosaccharomyces pombe (strain 972 / ATCC 24843) (Fission yeast).